We begin with the raw amino-acid sequence, 877 residues long: Dystroglycan 1 (877 aa).

The N-terminal stretch at 1 to 29 is a signal peptide; sequence MRMSAGLSLLIPLWGRTFLLLLSVAVTQS. The interval 30 to 408 is required for laminin recognition; sequence RWPSEPSDAV…GHIRPTMTIP (379 aa). Residues 49–71 form an O-glycosylated at one site region; it reads SMHSVLSDLHEAVPTVVGIPDGT. The N-linked (GlcNAc...) asparagine glycan is linked to Asn-141. Cys-182 and Cys-264 are disulfide-bonded. Residues 316–468 are mucin-like domain; sequence ATPTPVTAIG…PPTRIRTTTS (153 aa). O-linked (Man6P...) threonine glycosylation is found at Thr-317, Thr-319, and Thr-379. Disordered regions lie at residues 380-444 and 458-480; these read PTLG…PVPR and SPPT…QRPE. Over residues 413-433 the composition is skewed to low complexity; it reads PTAVATPPTPTTKNPRVSXPT. The tract at residues 446–468 is O-glycosylated at seven sites with GalNAc; that stretch reads TTKAPITRLETASPPTRIRTTTS. The Peptidase S72 domain occupies 585–694; sequence RAPARFTAKF…MSIAVTGSGS (110 aa). Residues Asn-623, Asn-631, and Asn-643 are each glycosylated (N-linked (GlcNAc...) asparagine). The cysteines at positions 651 and 695 are disulfide-linked. Positions 706–717 are enriched in pro residues; that stretch reads PKRVPSEAPPTE. Positions 706–727 are disordered; that stretch reads PKRVPSEAPPTEVPDRDPEKSS. Residues 718–727 are compositionally biased toward basic and acidic residues; that stretch reads VPDRDPEKSS. A helical membrane pass occupies residues 732-757; that stretch reads YLHTVIPAVVVAAILLIAGIIAMICY. Positions 758–764 match the Nuclear localization signal motif; that stretch reads RKKRKGK. Thr-772 is modified (phosphothreonine). Positions 801–877 are required for interaction with CAV3; the sequence is LQEEKAPLPP…YRSPPPYVPP (77 aa). Residues 805 to 877 form a disordered region; it reads KAPLPPPEYP…YRSPPPYVPP (73 aa). The span at 814–828 shows a compositional bias: polar residues; the sequence is PNQSVPETTPLNQDT. Over residues 841-852 the composition is skewed to pro residues; that stretch reads NAPPYQPPPPFT. The segment at 862–877 is required for binding DMD and UTRN; the sequence is PKNMTPYRSPPPYVPP. The PPXY motif motif lies at 871–874; sequence PPPY. Phosphotyrosine; by SRC is present on Tyr-874.

As to quaternary structure, monomer. Heterodimer of alpha- and beta-dystroglycan subunits which are the central components of the dystrophin-glycoprotein complex. This complex then can form a dystrophin-associated glycoprotein complex (DGC) which is composed of three subcomplexes: a cytoplasmic complex comprised of DMD (or UTRN), DTNA and a number of syntrophins, such as SNTB1, SNTB2, SNTG1 and SNTG2, the transmembrane dystroglycan complex, and the sarcoglycan-sarcospan complex. Interacts (via the N-terminal of alphaDAG1) with LARGE1; the interaction enhances laminin binding. Interacts with SGCD. Interacts with AGR2 and AGR3. Interacts (betaDAG1) with DMD; the interaction is inhibited by phosphorylation on the PPXY motif. Interacts (betaDAG1, via its PPXY motif) with UTRN (via its WWW and ZZ domains); the interaction is inhibited by phosphorylation on the PPXY motif. Interacts (betaDAG1, via its phosphorylated PPXY motif) with the SH2 domain-containing proteins, FYN, CSK, NCK and SHC. Interacts (betaDAG1) with CAV3 (via a central WW-like domain); the interaction disrupts the binding of DMD. BetaDAG1 directly interacts with ANK3, but not with ANK2; this interaction does not interfere with DMD-binding and is required for retention at costameres. Identified in a dystroglycan complex that contains at least PRX, DRP2, UTRN, DMD and DAG1. Interacts with POMGNT1. BetaDAG1 interacts with CD93. Post-translationally, O-glycosylated. POMGNT1 catalyzes the initial addition of N-acetylglucosamine, giving rise to the GlcNAc(beta1-2)Man(alpha1-)O-Ser/Thr moiety and thus providing the necessary basis for the addition of further carbohydrate moieties. Heavily O-glycosylated comprising of up to two thirds of its mass and the carbohydrate composition differs depending on tissue type. Mucin-type O-glycosylation is important for ligand binding activity. O-mannosylation of alpha-DAG1 is found in high abundance in both brain and muscle where the most abundant glycan is Sia-alpha-2-3-Gal-beta-1-4-Glc-NAc-beta-1-2-Man. In muscle, glycosylation on Thr-317, Thr-319 and Thr-379 by a phosphorylated O-mannosyl glycan with the structure 2-(N-acetylamido)-2-deoxygalactosyl-beta-1,3-2-(N-acetylamido)-2-deoxyglucosyl-beta-1,4-6-phosphomannose is mediated by like-acetylglucosaminyltransferase (LARGE1) protein amd is required for laminin binding. O-glycosylated in the N-terminal region with a core 1 or possibly core 8 glycan. The brain form displays a unique glycosylation pattern which is absent in other tissues; this form shows enhanced binding to laminin LAMA5 compared to the skeletal muscle form. N-glycosylated. In terms of processing, autolytic cleavage produces the alpha and beta subunits. In cutaneous cells, as well as in certain pathological conditions, shedding of beta-dystroglycan can occur releasing a peptide of about 30 kDa. Post-translationally, SRC-mediated phosphorylation of the PPXY motif of the beta subunit recruits SH2 domain-containing proteins, but inhibits binding to WWW domain-containing proteins, DMD and UTRN. This phosphorylation also inhibits nuclear entry.

Its subcellular location is the secreted. It is found in the extracellular space. The protein resides in the cell membrane. The protein localises to the cytoplasm. It localises to the cytoskeleton. Its subcellular location is the nucleus. It is found in the nucleoplasm. The protein resides in the sarcolemma. The protein localises to the postsynaptic cell membrane. The dystroglycan complex is involved in a number of processes including laminin and basement membrane assembly, sarcolemmal stability, cell survival, peripheral nerve myelination, nodal structure, cell migration, and epithelial polarization. Its function is as follows. Extracellular peripheral glycoprotein that acts as a receptor for extracellular matrix proteins containing laminin-G domains. Receptor for laminin-2 (LAMA2) and agrin in peripheral nerve Schwann cells. Also acts as a receptor for laminin LAMA5. In terms of biological role, transmembrane protein that plays important roles in connecting the extracellular matrix to the cytoskeleton. Acts as a cell adhesion receptor in both muscle and non-muscle tissues. Receptor for both DMD and UTRN and, through these interactions, scaffolds axin to the cytoskeleton. Also functions in cell adhesion-mediated signaling and implicated in cell polarity. The chain is Dystroglycan 1 from Sus scrofa (Pig).